The following is a 206-amino-acid chain: Two-component response regulator ORR7 (206 aa).

Residues 53-92 (VVPLHDNASAEDDDDDEEDDDEDDDDDDDEDDEEEAAPPY) form a disordered region. Over residues 61 to 88 (SAEDDDDDEEDDDEDDDDDDDEDDEEEA) the composition is skewed to acidic residues. Residues 92–205 (YVMAVDDSSV…DISRITSRML (114 aa)) enclose the Response regulatory domain. The residue at position 138 (D138) is a 4-aspartylphosphate.

Belongs to the ARR family. Type-A subfamily. Two-component system major event consists of a His-to-Asp phosphorelay between a sensor histidine kinase (HK) and a response regulator (RR). In plants, the His-to-Asp phosphorelay involves an additional intermediate named Histidine-containing phosphotransfer protein (HPt). This multistep phosphorelay consists of a His-Asp-His-Asp sequential transfer of a phosphate group between first a His and an Asp of the HK protein, followed by the transfer to a conserved His of the HPt protein and finally the transfer to an Asp in the receiver domain of the RR protein. In terms of tissue distribution, expressed in flowers, and at low levels in roots, mature leaves and shoots.

Its function is as follows. Functions as a response regulator involved in His-to-Asp phosphorelay signal transduction system. Phosphorylation of the Asp residue in the receiver domain activates the ability of the protein to promote the transcription of target genes. Type-A response regulators seem to act as negative regulators of the cytokinin signaling. The protein is Two-component response regulator ORR7 of Oryza sativa subsp. indica (Rice).